The sequence spans 1004 residues: Sodium/potassium-transporting ATPase subunit alpha-B (1004 aa).

Helical transmembrane passes span 76-96 and 110-126; these read LFGG…LAYG and NLYL…VTGI. Positions 197 to 216 are disordered; that stretch reads SSLTGESEPQARSPEFTNDN. The next 2 membrane-spanning stretches (helical) occupy residues 272–294 and 301–329; these read FIHI…AFVL and AVVF…TLTA. The active-site 4-aspartylphosphate intermediate is the D357. Residue K489 coordinates ATP. 2 residues coordinate Mg(2+): D698 and D702. Helical transmembrane passes span 768–791, 828–855, 897–918, and 934–959; these read ISPF…ILCI, ERLI…VIMA, SSCH…LIIS, and ILNF…DKGL.

This sequence belongs to the cation transport ATPase (P-type) (TC 3.A.3) family. Type IIC subfamily. The sodium/potassium-transporting ATPase is composed of a catalytic alpha subunit, an auxiliary non-catalytic beta subunit and an additional regulatory subunit.

It localises to the cell membrane. It catalyses the reaction K(+)(out) + Na(+)(in) + ATP + H2O = K(+)(in) + Na(+)(out) + ADP + phosphate + H(+). In terms of biological role, this is the catalytic component of the active enzyme, which catalyzes the hydrolysis of ATP coupled with the exchange of sodium and potassium ions across the plasma membrane. This action creates the electrochemical gradient of sodium and potassium ions, providing the energy for active transport of various nutrients. This is Sodium/potassium-transporting ATPase subunit alpha-B from Artemia franciscana (Brine shrimp).